A 145-amino-acid polypeptide reads, in one-letter code: Immunoglobulin iota chain (145 aa).

A signal peptide spans 1-19 (MSWAPVLLMLFVYCTGCGP). The tract at residues 20-41 (QPVLHQPPAMSSALGTTIRLTC) is framework-1. Residues 20 to 132 (QPVLHQPPAM…EKEEREREWE (113 aa)) form the Ig-like V-type domain. A disulfide bridge connects residues C41 and C115. The tract at residues 42–56 (TLRNDHDIGVYSVYW) is complementarity-determining-1. The interval 57–70 (YQQRPGHPPRFLLR) is framework-2. Residues 71–81 (YFSQSDKSQGP) form a complementarity-determining-2 region. The interval 82–115 (QVPPRFSGSKDVARNRGYLSISELQPEDEAMYYC) is framework-3. A compositionally biased stretch (basic and acidic residues) spans 121-130 (SSEKEERERE). A disordered region spans residues 121-145 (SSEKEEREREWEEEMEPTAARTRVP).

The protein belongs to the immunoglobulin superfamily. As to quaternary structure, interacts with IGLL1. Interacts with SYNV1/HRD1 (via N-terminus); this interaction leads to increased VPREB1 ubiquitination and degradation in pre-B cells, possibly through a lysosomal, not proteasomal, pathway. In terms of tissue distribution, only expressed by pre-B-cells.

The protein resides in the endoplasmic reticulum. Associates with the Ig-mu chain to form a molecular complex that is expressed on the surface of pre-B-cells. This complex presumably regulates Ig gene rearrangements in the early steps of B-cell differentiation. The polypeptide is Immunoglobulin iota chain (VPREB1) (Homo sapiens (Human)).